Consider the following 400-residue polypeptide: Nicotinate phosphoribosyltransferase (400 aa).

Phosphohistidine; by autocatalysis is present on histidine 220.

Belongs to the NAPRTase family. Post-translationally, transiently phosphorylated on a His residue during the reaction cycle. Phosphorylation strongly increases the affinity for substrates and increases the rate of nicotinate D-ribonucleotide production. Dephosphorylation regenerates the low-affinity form of the enzyme, leading to product release.

The enzyme catalyses nicotinate + 5-phospho-alpha-D-ribose 1-diphosphate + ATP + H2O = nicotinate beta-D-ribonucleotide + ADP + phosphate + diphosphate. It participates in cofactor biosynthesis; NAD(+) biosynthesis; nicotinate D-ribonucleotide from nicotinate: step 1/1. Functionally, catalyzes the synthesis of beta-nicotinate D-ribonucleotide from nicotinate and 5-phospho-D-ribose 1-phosphate at the expense of ATP. The sequence is that of Nicotinate phosphoribosyltransferase from Salmonella schwarzengrund (strain CVM19633).